Here is a 376-residue protein sequence, read N- to C-terminus: Thymidine kinase (376 aa).

Positions 1–39 (MASYPCHQHASAFDQAARSRGHSNRRTALRPRRQQEATE) are disordered. Positions 19 to 32 (SRGHSNRRTALRPR) are enriched in basic residues. 56 to 63 (GPHGMGKT) is a binding site for ATP. E83 (proton acceptor) is an active-site residue. Substrate contacts are provided by Y101 and Q125. Residue R216 coordinates ATP. Substrate is bound at residue R222. Residues 260 to 280 (GQLSGTAVPPQGAEPQSNAGP) are disordered.

The protein belongs to the herpesviridae thymidine kinase family. In terms of assembly, homodimer.

It carries out the reaction thymidine + ATP = dTMP + ADP + H(+). Catalyzes the transfer of the gamma-phospho group of ATP to thymidine to generate dTMP in the salvage pathway of pyrimidine synthesis. The dTMP serves as a substrate for DNA polymerase during viral DNA replication. Allows the virus to be reactivated and to grow in non-proliferative cells lacking a high concentration of phosphorylated nucleic acid precursors. The sequence is that of Thymidine kinase from Human herpesvirus 1 (strain KOS) (HHV-1).